The primary structure comprises 718 residues: K(+)-insensitive pyrophosphate-energized proton pump (718 aa).

Helical transmembrane passes span 6-26, 54-76, 81-103, 112-132, 133-153, and 168-188; these read AVLVLVIACGVVSVLFAIWAI, LTRQYSTIAIVGVVVFLAAWYLL, AIGFLIGAVLSGVTGFIGMHVSV, AASLSLAGGLELAFKSGAITG, LLVAGLALLGVSVYYFILTVW, and VSLGFGASLISIFARLGGGIF. Lysine 190 provides a ligand contact to substrate. Aspartate 193, aspartate 197, asparagine 220, and aspartate 223 together coordinate Mg(2+). 6 helical membrane passes run 240-260, 265-285, 300-320, 335-355, 385-405, and 413-433; these read AVTVVATMVLGAIFFNGSDIL, LYPLMICGACVITSIVGTFFV, GLIATGLLSIVGLAIANTLTV, GTNLFLCGLIGLIVTGLIVVI, GLAVSLESTALPAIVIVGGII, and LFGTAIAVTAMLGIAGMIVAL. Aspartate 441 serves as a coordination point for Mg(2+). Helical transmembrane passes span 472–492, 524–544, 593–613, and 620–640; these read AVTKGYAIGSAGLGALVLFAA, YVVAGLIFGGLIPYLFGGMAM, IIPSLLPVLAPIVVYFGVLLI, and AFAALGASLLGVIVNGLFVAI. Ca(2+)-binding residues include aspartate 650, aspartate 682, and aspartate 686. Lysine 689 provides a ligand contact to substrate. The chain crosses the membrane as a helical span at residues 695 to 715; the sequence is AVNPAIKITNIVALLLLAVLA.

It belongs to the H(+)-translocating pyrophosphatase (TC 3.A.10) family. K(+)-insensitive subfamily. In terms of assembly, homodimer. Requires Mg(2+) as cofactor.

The protein localises to the cell inner membrane. The enzyme catalyses diphosphate + H2O + H(+)(in) = 2 phosphate + 2 H(+)(out). Functionally, proton pump that utilizes the energy of pyrophosphate hydrolysis as the driving force for proton movement across the membrane. Generates a proton motive force. The protein is K(+)-insensitive pyrophosphate-energized proton pump of Brucella anthropi (strain ATCC 49188 / DSM 6882 / CCUG 24695 / JCM 21032 / LMG 3331 / NBRC 15819 / NCTC 12168 / Alc 37) (Ochrobactrum anthropi).